Consider the following 657-residue polypeptide: Probable Xaa-Pro aminopeptidase P (657 aa).

Residues Asp-453, Asp-464, Glu-562, and Glu-576 each contribute to the Mn(2+) site.

Belongs to the peptidase M24B family. Requires Mn(2+) as cofactor.

The enzyme catalyses Release of any N-terminal amino acid, including proline, that is linked to proline, even from a dipeptide or tripeptide.. Its function is as follows. Catalyzes the removal of a penultimate prolyl residue from the N-termini of peptides. This Talaromyces marneffei (strain ATCC 18224 / CBS 334.59 / QM 7333) (Penicillium marneffei) protein is Probable Xaa-Pro aminopeptidase P (ampp).